Consider the following 284-residue polypeptide: NAD kinase (284 aa).

The Proton acceptor role is filled by aspartate 61. NAD(+) is bound by residues 61–62 (DG), arginine 66, 136–137 (ND), arginine 147, lysine 164, aspartate 166, and leucine 201.

Belongs to the NAD kinase family. It depends on a divalent metal cation as a cofactor.

It is found in the cytoplasm. It carries out the reaction NAD(+) + ATP = ADP + NADP(+) + H(+). Its function is as follows. Involved in the regulation of the intracellular balance of NAD and NADP, and is a key enzyme in the biosynthesis of NADP. Catalyzes specifically the phosphorylation on 2'-hydroxyl of the adenosine moiety of NAD to yield NADP. This is NAD kinase from Dehalococcoides mccartyi (strain CBDB1).